Consider the following 167-residue polypeptide: Ubiquitin-conjugating enzyme E2 15 (167 aa).

In terms of domain architecture, UBC core spans 5–165; that stretch reads ASEQLLRKQL…VRRLVRRSIE (161 aa). Catalysis depends on Cys90, which acts as the Glycyl thioester intermediate.

The protein belongs to the ubiquitin-conjugating enzyme family.

It catalyses the reaction S-ubiquitinyl-[E1 ubiquitin-activating enzyme]-L-cysteine + [E2 ubiquitin-conjugating enzyme]-L-cysteine = [E1 ubiquitin-activating enzyme]-L-cysteine + S-ubiquitinyl-[E2 ubiquitin-conjugating enzyme]-L-cysteine.. It functions in the pathway protein modification; protein ubiquitination. Its function is as follows. Catalyzes the covalent attachment of ubiquitin to other proteins. Has a role in the formation of chromatin structures that influence the localization of transcriptional silencing factors. This Schizosaccharomyces pombe (strain 972 / ATCC 24843) (Fission yeast) protein is Ubiquitin-conjugating enzyme E2 15 (ubc15).